The following is a 53-amino-acid chain: Insulin (53 aa).

A propeptide spans 1-30 (DVEPLLGFLSPKSGQENEVDDFPYKGQGEL) (c peptide). Cysteines 38 and 43 form a disulfide.

The protein belongs to the insulin family. In terms of assembly, heterodimer of a B chain and an A chain linked by two disulfide bonds.

The protein localises to the secreted. In terms of biological role, insulin decreases blood glucose concentration. It increases cell permeability to monosaccharides, amino acids and fatty acids. It accelerates glycolysis, the pentose phosphate cycle, and glycogen synthesis in liver. This is Insulin (ins) from Anguilla anguilla (European freshwater eel).